Here is a 793-residue protein sequence, read N- to C-terminus: Serine/threonine-protein kinase MARK1 (793 aa).

The segment at 1–40 is disordered; it reads MSARTPLPTVNERDTENHTSVDGYTETHIPPTKSSSRQNI. Residue threonine 5 is modified to Phosphothreonine. The region spanning 60–311 is the Protein kinase domain; sequence YRLQKTIGKG…LEQIMKDRWM (252 aa). Residues 66-74 and lysine 89 each bind ATP; that span reads IGKGNFAKV. Aspartate 182 acts as the Proton acceptor in catalysis. Position 208 is a phosphothreonine (threonine 208). Threonine 215 is modified (phosphothreonine; by LKB1 and TAOK1). Serine 219 carries the phosphoserine; by GSK3-beta modification. The 42-residue stretch at 329–370 folds into the UBA domain; the sequence is DLNDAKRIDIMVTMGFARDEINDALVSQKYDEVMATYILLGR. Disordered regions lie at residues 377 to 499 and 517 to 697; these read GGES…GGSM and LQNG…KPRS. Residues 380–403 show a composition bias toward polar residues; sequence SLSSGNLCQRSRPSSDLNNSTLQS. 6 positions are modified to phosphoserine: serine 382, serine 390, serine 393, serine 403, serine 423, and serine 444. The segment covering 447–459 has biased composition (basic and acidic residues); it reads SEQKEEWDKDTAR. A compositionally biased stretch (polar residues) spans 462 to 473; it reads GSTTVGSKSEVT. A Phosphoserine modification is found at serine 475. The span at 487–499 shows a compositional bias: polar residues; it reads AGPSNNVYSGGSM. Composition is skewed to low complexity over residues 523-547 and 585-599; these read SSLTEMSASSMSSTGSTVASAGPSA and PAASPSAHSISASTP. The residue at position 588 (serine 588) is a Phosphoserine. Threonine 613 carries the phosphothreonine; by PKC/PRKCZ modification. The segment covering 647–657 has biased composition (polar residues); sequence GTSTGIISKIT. 2 stretches are compositionally biased toward basic and acidic residues: residues 661–676 and 683–695; these read VRRDPSEGEASGRTDT and EPKDKEEGKEAKP. Residue serine 666 is modified to Phosphoserine. The 50-residue stretch at 744-793 folds into the KA1 domain; sequence DARQDSLVQWEMEVCKLPRLSLNGVRFKRISGTSIAFKNIASKIANELKL.

It belongs to the protein kinase superfamily. CAMK Ser/Thr protein kinase family. SNF1 subfamily. In terms of assembly, interacts with MAPT/TAU. Requires Mg(2+) as cofactor. Phosphorylation at Thr-613 by PRKCZ/aPKC in polarized epithelial cells inhibits the kinase activity. Phosphorylated at Thr-215 by STK11/LKB1 in complex with STE20-related adapter-alpha (STRADA) pseudo kinase and CAB39. Phosphorylation at Thr-215 by TAOK1 activates the kinase activity, leading to phosphorylation and detachment of MAPT/TAU from microtubules. Phosphorylation at Ser-219 by GSK3-beta (GSK3B) inhibits the kinase activity. Highly expressed in brain and spleen and at lower levels in kidney and skeletal muscle.

The protein localises to the cell membrane. It localises to the cytoplasm. Its subcellular location is the cytoskeleton. The protein resides in the cell projection. It is found in the dendrite. The catalysed reaction is L-seryl-[protein] + ATP = O-phospho-L-seryl-[protein] + ADP + H(+). The enzyme catalyses L-threonyl-[protein] + ATP = O-phospho-L-threonyl-[protein] + ADP + H(+). It carries out the reaction L-seryl-[tau protein] + ATP = O-phospho-L-seryl-[tau protein] + ADP + H(+). It catalyses the reaction L-threonyl-[tau protein] + ATP = O-phospho-L-threonyl-[tau protein] + ADP + H(+). Its activity is regulated as follows. Activated by phosphorylation on Thr-215. Inhibited by phosphorylation at Ser-219. Its function is as follows. Serine/threonine-protein kinase. Involved in cell polarity and microtubule dynamics regulation. Phosphorylates DCX, MAP2 and MAP4. Phosphorylates the microtubule-associated protein MAPT/TAU. Involved in cell polarity by phosphorylating the microtubule-associated proteins MAP2, MAP4 and MAPT/TAU at KXGS motifs, causing detachment from microtubules, and their disassembly. Involved in the regulation of neuronal migration through its dual activities in regulating cellular polarity and microtubule dynamics, possibly by phosphorylating and regulating DCX. Also acts as a positive regulator of the Wnt signaling pathway, probably by mediating phosphorylation of dishevelled proteins (DVL1, DVL2 and/or DVL3). In Rattus norvegicus (Rat), this protein is Serine/threonine-protein kinase MARK1.